The following is a 559-amino-acid chain: 5'-AMP-activated protein kinase catalytic subunit alpha-1 (559 aa).

In terms of domain architecture, Protein kinase spans 27–279 (YILGDTLGVG…IKDIREHEWF (253 aa)). Position 32 is a phosphothreonine (T32). ATP-binding positions include 33-41 (LGVGTFGKV) and K56. D150 functions as the Proton acceptor in the catalytic mechanism. T183 is subject to Phosphothreonine; by LKB1 and CaMKK2. Phosphothreonine is present on residues T269 and T355. Residues 302-381 (EALKEVCEKF…PERVPFLVAE (80 aa)) form an AIS region. The residue at position 356 (S356) is a Phosphoserine. The residue at position 360 (S360) is a Phosphoserine; by ULK1. T368 bears the Phosphothreonine; by ULK1 mark. T382 is modified (phosphothreonine). S397 is modified (phosphoserine; by ULK1). S467 and S486 each carry phosphoserine. Residues 484 to 536 (AKSGTATPQRSGSISNYRSCQRSDSDAEAQGKPSEVSLTSSVTSLDSSPVDVA) form a disordered region. Polar residues predominate over residues 485–505 (KSGTATPQRSGSISNYRSCQR). A Phosphoserine; by ULK1 modification is found at S486. T488 carries the phosphothreonine; by ULK1 modification. T490 bears the Phosphothreonine mark. Residues S496, S508, S524, and S527 each carry the phosphoserine modification. The span at 516 to 535 (PSEVSLTSSVTSLDSSPVDV) shows a compositional bias: low complexity.

Belongs to the protein kinase superfamily. CAMK Ser/Thr protein kinase family. SNF1 subfamily. In terms of assembly, AMPK is a heterotrimer of an alpha catalytic subunit (PRKAA1 or PRKAA2), a beta (PRKAB1 or PRKAB2) and a gamma non-catalytic subunits (PRKAG1, PRKAG2 or PRKAG3). Interacts with FNIP1 and FNIP2. Requires Mg(2+) as cofactor. In terms of processing, ubiquitinated. Phosphorylated at Thr-183 by STK11/LKB1 in complex with STE20-related adapter-alpha (STRADA) pseudo kinase and CAB39. Also phosphorylated at Thr-183 by CAMKK2; triggered by a rise in intracellular calcium ions, without detectable changes in the AMP/ATP ratio. CAMKK1 can also phosphorylate Thr-183, but at a much lower level. Dephosphorylated by protein phosphatase 2A and 2C (PP2A and PP2C). Phosphorylated by ULK1 and ULK2; leading to negatively regulate AMPK activity and suggesting the existence of a regulatory feedback loop between ULK1, ULK2 and AMPK. There is some ambiguity for some phosphosites: Ser-360/Thr-368 and Ser-486/Thr-488. Dephosphorylated by PPM1A and PPM1B. Post-translationally, glycosylated; O-GlcNAcylated by OGT, promoting the AMP-activated protein kinase (AMPK) activity. As to expression, low expression in kidney, liver, lung, heart and brain.

It is found in the cytoplasm. It localises to the nucleus. The enzyme catalyses L-seryl-[protein] + ATP = O-phospho-L-seryl-[protein] + ADP + H(+). It carries out the reaction L-threonyl-[protein] + ATP = O-phospho-L-threonyl-[protein] + ADP + H(+). It catalyses the reaction L-seryl-[acetyl-CoA carboxylase] + ATP = O-phospho-L-seryl-[acetyl-CoA carboxylase] + ADP + H(+). The catalysed reaction is L-seryl-[3-hydroxy-3-methylglutaryl-coenzyme A reductase] + ATP = O-phospho-L-seryl-[3-hydroxy-3-methylglutaryl-coenzyme A reductase] + ADP + H(+). The enzyme catalyses L-seryl-[tau protein] + ATP = O-phospho-L-seryl-[tau protein] + ADP + H(+). It carries out the reaction L-threonyl-[tau protein] + ATP = O-phospho-L-threonyl-[tau protein] + ADP + H(+). Activated by phosphorylation on Thr-183. Binding of AMP to non-catalytic gamma subunit (PRKAG1, PRKAG2 or PRKAG3) results in allosteric activation, inducing phosphorylation on Thr-183. AMP-binding to gamma subunit also sustains activity by preventing dephosphorylation of Thr-183. ADP also stimulates Thr-183 phosphorylation, without stimulating already phosphorylated AMPK. ATP promotes dephosphorylation of Thr-183, rendering the enzyme inactive. Under physiological conditions AMPK mainly exists in its inactive form in complex with ATP, which is much more abundant than AMP. Selectively inhibited by compound C (6-[4-(2-Piperidin-1-yl-ethoxy)-phenyl)]-3-pyridin-4-yl-pyyrazolo[1,5-a] pyrimidine. Activated by resveratrol, a natural polyphenol present in red wine, and S17834, a synthetic polyphenol. Its function is as follows. Catalytic subunit of AMP-activated protein kinase (AMPK), an energy sensor protein kinase that plays a key role in regulating cellular energy metabolism. In response to reduction of intracellular ATP levels, AMPK activates energy-producing pathways and inhibits energy-consuming processes: inhibits protein, carbohydrate and lipid biosynthesis, as well as cell growth and proliferation. AMPK acts via direct phosphorylation of metabolic enzymes, and by longer-term effects via phosphorylation of transcription regulators. Regulates lipid synthesis by phosphorylating and inactivating lipid metabolic enzymes such as ACACA, ACACB, GYS1, HMGCR and LIPE; regulates fatty acid and cholesterol synthesis by phosphorylating acetyl-CoA carboxylase (ACACA and ACACB) and hormone-sensitive lipase (LIPE) enzymes, respectively. Promotes lipolysis of lipid droplets by mediating phosphorylation of isoform 1 of CHKA (CHKalpha2). Regulates insulin-signaling and glycolysis by phosphorylating IRS1, PFKFB2 and PFKFB3. AMPK stimulates glucose uptake in muscle by increasing the translocation of the glucose transporter SLC2A4/GLUT4 to the plasma membrane, possibly by mediating phosphorylation of TBC1D4/AS160. Regulates transcription and chromatin structure by phosphorylating transcription regulators involved in energy metabolism such as CRTC2/TORC2, FOXO3, histone H2B, HDAC5, MEF2C, MLXIPL/ChREBP, EP300, HNF4A, p53/TP53, SREBF1, SREBF2 and PPARGC1A. Acts as a key regulator of glucose homeostasis in liver by phosphorylating CRTC2/TORC2, leading to CRTC2/TORC2 sequestration in the cytoplasm. In response to stress, phosphorylates 'Ser-36' of histone H2B (H2BS36ph), leading to promote transcription. Acts as a key regulator of cell growth and proliferation by phosphorylating FNIP1, TSC2, RPTOR, WDR24 and ATG1/ULK1: in response to nutrient limitation, negatively regulates the mTORC1 complex by phosphorylating RPTOR component of the mTORC1 complex and by phosphorylating and activating TSC2. Also phosphorylates and inhibits GATOR2 subunit WDR24 in response to nutrient limitation, leading to suppress glucose-mediated mTORC1 activation. In response to energetic stress, phosphorylates FNIP1, inactivating the non-canonical mTORC1 signaling, thereby promoting nuclear translocation of TFEB and TFE3, and inducing transcription of lysosomal or autophagy genes. In response to nutrient limitation, promotes autophagy by phosphorylating and activating ATG1/ULK1. In that process, it also activates WDR45/WIPI4. Phosphorylates CASP6, thereby preventing its autoprocessing and subsequent activation. In response to nutrient limitation, phosphorylates transcription factor FOXO3 promoting FOXO3 mitochondrial import. Also acts as a regulator of cellular polarity by remodeling the actin cytoskeleton; probably by indirectly activating myosin. AMPK also acts as a regulator of circadian rhythm by mediating phosphorylation of CRY1, leading to destabilize it. May regulate the Wnt signaling pathway by phosphorylating CTNNB1, leading to stabilize it. Also has tau-protein kinase activity: in response to amyloid beta A4 protein (APP) exposure, activated by CAMKK2, leading to phosphorylation of MAPT/TAU; however the relevance of such data remains unclear in vivo. Also phosphorylates CFTR, EEF2K, KLC1, NOS3 and SLC12A1. Regulates hepatic lipogenesis. Activated via SIRT3, represses sterol regulatory element-binding protein (SREBP) transcriptional activities and ATP-consuming lipogenesis to restore cellular energy balance. Upon stress, regulates mitochondrial fragmentation through phosphorylation of MTFR1L. This is 5'-AMP-activated protein kinase catalytic subunit alpha-1 (Prkaa1) from Rattus norvegicus (Rat).